Here is a 162-residue protein sequence, read N- to C-terminus: MSKIISVGISEHKVASDPVVLVTYGLGSCVGIALYDPEVRIGGLAHTLLPAPVREVQGAERTAKFTCWAVDLMVEELLKCGCAPERLVAKLAGGATMFEPQYRSAHGGIGERNVAAAREALERSGIPLVAEDTGGDYGRSLEFNTATGIIMVRALQQPIKQL.

Belongs to the CheD family.

The catalysed reaction is L-glutaminyl-[protein] + H2O = L-glutamyl-[protein] + NH4(+). Functionally, probably deamidates glutamine residues to glutamate on methyl-accepting chemotaxis receptors (MCPs), playing an important role in chemotaxis. This is Probable chemoreceptor glutamine deamidase CheD 2 from Geobacter metallireducens (strain ATCC 53774 / DSM 7210 / GS-15).